The chain runs to 476 residues: Ribulose bisphosphate carboxylase large chain (476 aa).

Substrate-binding residues include N116 and T166. Catalysis depends on K168, which acts as the Proton acceptor. A substrate-binding site is contributed by K170. Positions 194, 196, and 197 each coordinate Mg(2+). Residue K194 is modified to N6-carboxylysine. The Proton acceptor role is filled by H286. Substrate contacts are provided by R287, H319, and S371.

Belongs to the RuBisCO large chain family. Type I subfamily. As to quaternary structure, heterohexadecamer of 8 large chains and 8 small chains. It depends on Mg(2+) as a cofactor.

It carries out the reaction 2 (2R)-3-phosphoglycerate + 2 H(+) = D-ribulose 1,5-bisphosphate + CO2 + H2O. It catalyses the reaction D-ribulose 1,5-bisphosphate + O2 = 2-phosphoglycolate + (2R)-3-phosphoglycerate + 2 H(+). Its function is as follows. RuBisCO catalyzes two reactions: the carboxylation of D-ribulose 1,5-bisphosphate, the primary event in carbon dioxide fixation, as well as the oxidative fragmentation of the pentose substrate. Both reactions occur simultaneously and in competition at the same active site. This is Ribulose bisphosphate carboxylase large chain from Pseudonocardia dioxanivorans (strain ATCC 55486 / DSM 44775 / JCM 13855 / CB1190).